The chain runs to 163 residues: NADH-quinone oxidoreductase subunit I (163 aa).

4Fe-4S ferredoxin-type domains are found at residues 54 to 84 and 94 to 123; these read LRRY…IDSA and TRYD…ETHI. The [4Fe-4S] cluster site is built by cysteine 64, cysteine 67, cysteine 70, cysteine 74, cysteine 103, cysteine 106, cysteine 109, and cysteine 113.

This sequence belongs to the complex I 23 kDa subunit family. NDH-1 is composed of 14 different subunits. Subunits NuoA, H, J, K, L, M, N constitute the membrane sector of the complex. The cofactor is [4Fe-4S] cluster.

The protein resides in the cell inner membrane. The catalysed reaction is a quinone + NADH + 5 H(+)(in) = a quinol + NAD(+) + 4 H(+)(out). Its function is as follows. NDH-1 shuttles electrons from NADH, via FMN and iron-sulfur (Fe-S) centers, to quinones in the respiratory chain. The immediate electron acceptor for the enzyme in this species is believed to be ubiquinone. Couples the redox reaction to proton translocation (for every two electrons transferred, four hydrogen ions are translocated across the cytoplasmic membrane), and thus conserves the redox energy in a proton gradient. The sequence is that of NADH-quinone oxidoreductase subunit I from Xanthomonas oryzae pv. oryzae (strain KACC10331 / KXO85).